Here is a 163-residue protein sequence, read N- to C-terminus: UPF0478 protein SERP1299 (163 aa).

A helical membrane pass occupies residues 7–27; it reads IAGIIAAIAFLILCIGIVVVL.

Belongs to the UPF0478 family.

Its subcellular location is the cell membrane. The chain is UPF0478 protein SERP1299 from Staphylococcus epidermidis (strain ATCC 35984 / DSM 28319 / BCRC 17069 / CCUG 31568 / BM 3577 / RP62A).